The primary structure comprises 152 residues: Transcriptional regulator MraZ (152 aa).

SpoVT-AbrB domains lie at 5–52 (INAI…TAAQ) and 81–124 (ATDV…NKEL).

It belongs to the MraZ family. As to quaternary structure, forms oligomers.

It localises to the cytoplasm. The protein localises to the nucleoid. The polypeptide is Transcriptional regulator MraZ (Legionella pneumophila (strain Paris)).